An 871-amino-acid chain; its full sequence is DNA mismatch repair protein MutS (871 aa).

616 to 623 (GPNMAGKS) lines the ATP pocket. Residues 801 to 825 (ETEKTEESMEGTNLPKKKKEEKTSS) form a disordered region.

It belongs to the DNA mismatch repair MutS family.

Its function is as follows. This protein is involved in the repair of mismatches in DNA. It is possible that it carries out the mismatch recognition step. This protein has a weak ATPase activity. The polypeptide is DNA mismatch repair protein MutS (Clostridium kluyveri (strain NBRC 12016)).